The following is a 361-amino-acid chain: DNA polymerase subunit gamma-2, mitochondrial (361 aa).

Residues 1–18 (MSRIQRCFKSLASAGFFR) constitute a mitochondrion transit peptide.

In terms of assembly, component of the DNA polymerase gamma complex consisting of two subunits: the catalytic subunit DNApol-gamma/DNApolG1 and the accessory subunit PolG2/DNApol-gamma35. In terms of tissue distribution, expressed in ovaries (at protein level).

It is found in the mitochondrion. As accessory component of the DNA polymerase gamma complex is involved in the replication of mitochondrial DNA. Does not bind DNA. Essential for mitochondrial DNA maintenance and larval development. This Drosophila melanogaster (Fruit fly) protein is DNA polymerase subunit gamma-2, mitochondrial.